Consider the following 426-residue polypeptide: Serine--tRNA ligase (426 aa).

Residues 36-66 (KRKHLQERTQDLQSQRNTISKEIGQKKAKGE) form a disordered region. The segment covering 46-55 (DLQSQRNTIS) has biased composition (polar residues). 233–235 (TAE) contacts L-serine. Position 264–266 (264–266 (RSE)) interacts with ATP. Glutamate 287 is a binding site for L-serine. 351 to 354 (EISS) provides a ligand contact to ATP. Serine 387 provides a ligand contact to L-serine.

It belongs to the class-II aminoacyl-tRNA synthetase family. Type-1 seryl-tRNA synthetase subfamily. As to quaternary structure, homodimer. The tRNA molecule binds across the dimer.

Its subcellular location is the cytoplasm. It catalyses the reaction tRNA(Ser) + L-serine + ATP = L-seryl-tRNA(Ser) + AMP + diphosphate + H(+). It carries out the reaction tRNA(Sec) + L-serine + ATP = L-seryl-tRNA(Sec) + AMP + diphosphate + H(+). It functions in the pathway aminoacyl-tRNA biosynthesis; selenocysteinyl-tRNA(Sec) biosynthesis; L-seryl-tRNA(Sec) from L-serine and tRNA(Sec): step 1/1. Its function is as follows. Catalyzes the attachment of serine to tRNA(Ser). Is also able to aminoacylate tRNA(Sec) with serine, to form the misacylated tRNA L-seryl-tRNA(Sec), which will be further converted into selenocysteinyl-tRNA(Sec). This is Serine--tRNA ligase from Francisella tularensis subsp. holarctica (strain FTNF002-00 / FTA).